Consider the following 461-residue polypeptide: tRNA modification GTPase MnmE (461 aa).

Arg-23, Glu-88, and Arg-127 together coordinate (6S)-5-formyl-5,6,7,8-tetrahydrofolate. The 160-residue stretch at 223-382 (GLSTVIVGKP…IEDALAEMVY (160 aa)) folds into the TrmE-type G domain. Asn-233 serves as a coordination point for K(+). GTP-binding positions include 233-238 (NVGKSS), 252-258 (TDVPGTT), and 277-280 (DTAG). Ser-237 is a Mg(2+) binding site. K(+) contacts are provided by Thr-252, Val-254, and Thr-257. Thr-258 contacts Mg(2+). Residue Lys-461 coordinates (6S)-5-formyl-5,6,7,8-tetrahydrofolate.

Belongs to the TRAFAC class TrmE-Era-EngA-EngB-Septin-like GTPase superfamily. TrmE GTPase family. In terms of assembly, homodimer. Heterotetramer of two MnmE and two MnmG subunits. K(+) serves as cofactor.

Its subcellular location is the cytoplasm. Exhibits a very high intrinsic GTPase hydrolysis rate. Involved in the addition of a carboxymethylaminomethyl (cmnm) group at the wobble position (U34) of certain tRNAs, forming tRNA-cmnm(5)s(2)U34. The protein is tRNA modification GTPase MnmE of Alkaliphilus oremlandii (strain OhILAs) (Clostridium oremlandii (strain OhILAs)).